The following is a 120-amino-acid chain: MFSLTQKIGFNAEKTACRYLQKQGLSFITKNFRYKQGEIDLIMSDQSILVFIEVRYRRFSDFIHPVATVTPLKQRRLIKTELHYLQKHRLLDKISCRFDIVGITADRQITWIKNAIEVEY.

It belongs to the UPF0102 family.

The polypeptide is UPF0102 protein CbuK_0265 (Coxiella burnetii (strain CbuK_Q154) (Coxiella burnetii (strain Q154))).